The chain runs to 322 residues: MPVTVTRTTITTTTTSSSGLGSPMIVGSPRALTQPLGLLRLLQLVSTCVAFSLVASVGAWTGSMGNWSMFTWCFCFSVTLIILIVELCGLQARFPLSWRNFPITFACYAALFCLSASIIYPTTYVQFLSHGRSRDHAIAATFFSCIACVAYATEVAWTRARPGEITGYMATVPGLLKVLETFVACIIFAFISDPNLYQHQPALEWCVAVYAICFILAAIAILLNLGECTNVLPIPFPSFLSGLALLSVLLYATALVLWPLYQFDEKYGGQPRRSRDVSCSRSHAYYVCAWDRRLAVAILTAINLLAYVADLVHSAHLVFVKV.

The segment covering 1–18 has biased composition (low complexity); it reads MPVTVTRTTITTTTTSSS. The tract at residues 1–21 is disordered; the sequence is MPVTVTRTTITTTTTSSSGLG. Ser-22 is subject to Phosphoserine. 2 MARVEL domains span residues 31 to 163 and 168 to 319; these read ALTQ…ARPG and YMAT…HLVF. The next 8 helical transmembrane spans lie at 41 to 61, 70 to 90, 101 to 121, 137 to 157, 171 to 191, 203 to 223, 239 to 259, and 294 to 314; these read LLQL…GAWT, FTWC…LCGL, FPIT…IIYP, AIAA…EVAW, TVPG…FAFI, LEWC…AILL, FLSG…VLWP, and LAVA…LVHS.

Belongs to the MAL family. In terms of tissue distribution, widely expressed. Not detected in thymus.

It localises to the membrane. This Homo sapiens (Human) protein is Myeloid-associated differentiation marker (MYADM).